The following is a 436-amino-acid chain: tRNA(Ile)-lysidine synthase (436 aa).

27–32 (SGGVDS) is a binding site for ATP.

Belongs to the tRNA(Ile)-lysidine synthase family.

The protein resides in the cytoplasm. It catalyses the reaction cytidine(34) in tRNA(Ile2) + L-lysine + ATP = lysidine(34) in tRNA(Ile2) + AMP + diphosphate + H(+). Functionally, ligates lysine onto the cytidine present at position 34 of the AUA codon-specific tRNA(Ile) that contains the anticodon CAU, in an ATP-dependent manner. Cytidine is converted to lysidine, thus changing the amino acid specificity of the tRNA from methionine to isoleucine. The polypeptide is tRNA(Ile)-lysidine synthase (Vibrio vulnificus (strain YJ016)).